The chain runs to 305 residues: Aurasperone B biosynthesis cluster protein A (305 aa).

The N-terminal stretch at 1–26 (MSIFFSIRFWPAAISAAILWLPQVLG) is a signal peptide. 8 N-linked (GlcNAc...) asparagine glycosylation sites follow: N29, N34, N64, N83, N132, N183, N218, and N288.

It belongs to the bfoA family.

Its function is as follows. Part of the gene cluster that mediates the biosynthesis of aurasperone B, a dimeric gamma-naphthopyrone. The first step in the biosynthesis of aurasperone B is the production of gamma-naphthopyrone precursor YWA1 by the non-reducing polyketide synthase albA, via condensation of one acetyl-CoA starter unit with 6 malonyl-CoA units. YWA1 is then methylated by aunE at position C-6 to yield foncesin which is further methylated at position C-8 by aunD to produce fonsecin B. A key enzyme in the biosynthetic pathway is the cytochrome P450 monooxygenase aunB which catalyzes the oxidative dimerization of fonsecin B to aurasperone B. AunB also catalyzes the oxidative dimerization of rubrofusarin B into aurasperone A. This chain is Aurasperone B biosynthesis cluster protein A, found in Aspergillus niger (strain ATCC MYA-4892 / CBS 513.88 / FGSC A1513).